The sequence spans 272 residues: MPTERKEDLHQQLKEIEKWEKDQQKVWFWEKLSRLPFQLLDKLTPEFIQKKIGKLLDEVGSFVQTGGQYLTSEKQIIRMFQKKLPEEIFESLEDIRKAPLPVMDEIAEGMGKNRTNAATVQGATTGVGGVFTLAADIPAVLGLSLKTLQDIAVAYGYDPKEKKERVFIVKCLQLTSADVVGKRSILQELKHYDQDRTYKNVASQIQGWREVVLGYRDTFGWKKLFQIVPVAGMVFGAAANRSTLNDITETGMMLYKKRRILERLKETEREME.

This is an uncharacterized protein from Bacillus subtilis (strain 168).